The chain runs to 475 residues: Ribulose bisphosphate carboxylase large chain (475 aa).

Residues 1-2 constitute a propeptide that is removed on maturation; that stretch reads MA. Position 3 is an N-acetylproline (proline 3). Substrate contacts are provided by asparagine 123 and threonine 173. The Proton acceptor role is filled by lysine 175. A substrate-binding site is contributed by lysine 177. Mg(2+) contacts are provided by lysine 201, aspartate 203, and glutamate 204. Position 201 is an N6-carboxylysine (lysine 201). Histidine 294 (proton acceptor) is an active-site residue. Substrate contacts are provided by arginine 295, histidine 327, and serine 379.

The protein belongs to the RuBisCO large chain family. Type I subfamily. In terms of assembly, heterohexadecamer of 8 large chains and 8 small chains. Mg(2+) is required as a cofactor.

It localises to the plastid. The protein resides in the chloroplast. The enzyme catalyses 2 (2R)-3-phosphoglycerate + 2 H(+) = D-ribulose 1,5-bisphosphate + CO2 + H2O. The catalysed reaction is D-ribulose 1,5-bisphosphate + O2 = 2-phosphoglycolate + (2R)-3-phosphoglycerate + 2 H(+). Its function is as follows. RuBisCO catalyzes two reactions: the carboxylation of D-ribulose 1,5-bisphosphate, the primary event in carbon dioxide fixation, as well as the oxidative fragmentation of the pentose substrate in the photorespiration process. Both reactions occur simultaneously and in competition at the same active site. In Ostreococcus tauri, this protein is Ribulose bisphosphate carboxylase large chain.